A 314-amino-acid chain; its full sequence is Acetyl-coenzyme A carboxylase carboxyl transferase subunit alpha (314 aa).

One can recognise a CoA carboxyltransferase C-terminal domain in the interval 32 to 289 (EIDMLEASLK…KKMFLKHLNE (258 aa)).

It belongs to the AccA family. In terms of assembly, acetyl-CoA carboxylase is a heterohexamer composed of biotin carboxyl carrier protein (AccB), biotin carboxylase (AccC) and two subunits each of ACCase subunit alpha (AccA) and ACCase subunit beta (AccD).

The protein resides in the cytoplasm. It carries out the reaction N(6)-carboxybiotinyl-L-lysyl-[protein] + acetyl-CoA = N(6)-biotinyl-L-lysyl-[protein] + malonyl-CoA. It functions in the pathway lipid metabolism; malonyl-CoA biosynthesis; malonyl-CoA from acetyl-CoA: step 1/1. Functionally, component of the acetyl coenzyme A carboxylase (ACC) complex. First, biotin carboxylase catalyzes the carboxylation of biotin on its carrier protein (BCCP) and then the CO(2) group is transferred by the carboxyltransferase to acetyl-CoA to form malonyl-CoA. The protein is Acetyl-coenzyme A carboxylase carboxyl transferase subunit alpha of Staphylococcus epidermidis (strain ATCC 35984 / DSM 28319 / BCRC 17069 / CCUG 31568 / BM 3577 / RP62A).